Consider the following 285-residue polypeptide: Iodotyrosine deiodinase 1 (285 aa).

Residues Met1–Lys21 form a helical membrane-spanning segment. FMN-binding positions include Arg96–Arg100 and Ser124–Gly125. 3,5-diiodo-L-tyrosine contacts are provided by Ala126, Glu153, Tyr157, and Lys178. Ala126, Glu153, Tyr157, and Lys178 together coordinate 3-iodo-L-tyrosine. FMN-binding positions include Thr233–Thr235 and Arg275.

The protein belongs to the nitroreductase family. Homodimer. It depends on FMN as a cofactor.

Its subcellular location is the cell membrane. It localises to the cytoplasmic vesicle membrane. It carries out the reaction 2 iodide + L-tyrosine + 2 NADP(+) = 3,5-diiodo-L-tyrosine + 2 NADPH + H(+). The catalysed reaction is iodide + L-tyrosine + NADP(+) = 3-iodo-L-tyrosine + NADPH. The enzyme catalyses 3-iodo-L-tyrosine + iodide + NADP(+) = 3,5-diiodo-L-tyrosine + NADPH + H(+). It catalyses the reaction L-tyrosine + chloride + NADP(+) = 3-chloro-L-tyrosine + NADPH. It carries out the reaction bromide + L-tyrosine + NADP(+) = 3-bromo-L-tyrosine + NADPH. In terms of biological role, catalyzes the dehalogenation of halotyrosines such as 3-bromo-L-tyrosine, 3-chloro-L-tyrosine, 3-iodo-L-tyrosine and 3,5-diiodo-L-tyrosine. During thyroid hormone biosynthesis, facilitates iodide salvage by catalysing the oxidative NADPH-dependent deiodination of the halogenated by-products of thyroid hormone production, monoiodotyrosine (L-MIT) and diiodotyrosine (L-DIT). The scavanged iodide can then reenter the hormone-producing pathways. Acts more efficiently on 3-iodo-L-tyrosine than 3,5-diiodo-L-tyrosine. In Rattus norvegicus (Rat), this protein is Iodotyrosine deiodinase 1 (Iyd).